A 166-amino-acid polypeptide reads, in one-letter code: Succinate dehydrogenase [ubiquinone] cytochrome b small subunit, mitochondrial (166 aa).

At 1–65 the chain is on the mitochondrial matrix side; sequence MASVARSSAL…VPPPSPSHGS (65 aa). The chain crosses the membrane as a helical span at residues 66 to 87; that stretch reads YHWTFDRVVAAGLIPLTVAPFA. At 88 to 94 the chain is on the mitochondrial intermembrane side; it reads AGSLNPT. A helical transmembrane segment spans residues 95-115; it reads MDAVLAATILIHSHTGFGNII. H106 lines the heme pocket. Over 116–124 the chain is Mitochondrial matrix; that stretch reads VDYVPSKRV. Y118 is an a ubiquinone binding site. Residues 125–149 traverse the membrane as a helical segment; the sequence is PKARKVFTWGLNAATVLVGLALYEF. Topologically, residues 150 to 166 are mitochondrial intermembrane; that stretch reads ETTDVGLTETIKRVWKA.

The protein belongs to the CybS family. As to quaternary structure, forms part of complex II containing four subunits: a flavoprotein (FP), an iron-sulfur protein (IP) and a cytochrome b composed of a large and a small subunit.

It localises to the mitochondrion inner membrane. It participates in carbohydrate metabolism; tricarboxylic acid cycle. Functionally, membrane-anchoring subunit of succinate dehydrogenase (SDH) that is involved in complex II of the mitochondrial electron transport chain and is responsible for transferring electrons from succinate to ubiquinone (coenzyme Q). The chain is Succinate dehydrogenase [ubiquinone] cytochrome b small subunit, mitochondrial from Neurospora crassa (strain ATCC 24698 / 74-OR23-1A / CBS 708.71 / DSM 1257 / FGSC 987).